The following is a 286-amino-acid chain: Transcriptional regulator of yeast form adherence 4 (286 aa).

Composition is skewed to low complexity over residues 1–29 (MSLP…PPSS) and 37–65 (LSTS…TTTN). A disordered region spans residues 1–71 (MSLPMSPVSP…TTTNYGTKTP (71 aa)). 2 C2H2-type zinc fingers span residues 78–101 (FNCT…LSTH) and 107–130 (FTCG…KNLH). Residues 146–260 (HCNKDNDSKS…ITNSSTSHIH (115 aa)) are disordered. Composition is skewed to low complexity over residues 156–165 (GSDSNTNKTN) and 228–244 (SVPS…PTST). Polar residues predominate over residues 245–260 (NNDTASITNSSTSHIH).

It localises to the nucleus. Functionally, transcription factor required for yeast cell adherence to silicone substrate. The chain is Transcriptional regulator of yeast form adherence 4 (TRY4) from Candida albicans (strain SC5314 / ATCC MYA-2876) (Yeast).